Here is a 70-residue protein sequence, read N- to C-terminus: Putative ankyrin repeat protein RC0502 (70 aa).

Residues 9–43 (KGRIPIHYATYSKQHEITQILILLQPGSEIDTVDN) form an ANK repeat.

The chain is Putative ankyrin repeat protein RC0502 from Rickettsia conorii (strain ATCC VR-613 / Malish 7).